Consider the following 919-residue polypeptide: MGLFRGFVFLLVLCLLHQSNTSFIKLNNNGFEDIVIVIDPSVPEDEKIIEQIEDMVTTASTYLFEATEKRFFFKNVSILIPENWKENPQYKRPKHENHKHADVIVAPPTLPGRDEPYTKQFTECGEKGEYIHFTPDLLLGKKQNEYGPPGKLFVHEWAHLRWGVFDEYNEDQPFYRAKSKKIEATRCSAGISGRNRVYKCQGGSCLSRACRIDSTTKLYGKDCQFFPDKVQTEKASIMFMQSIDSVVEFCNEKTHNQEAPSLQNIKCNFRSTWEVISNSEDFKNTIPMVTPPPPPVFSLLKISQRIVCLVLDKSGSMGGKDRLNRMNQAAKHFLLQTVENGSWVGMVHFDSTATIVNKLIQIKSSDERNTLMAGLPTYPLGGTSICSGIKYAFQVIGELHSQLDGSEVLLLTDGEDNTASSCIDEVKQSGAIVHFIALGRAADEAVIEMSKITGGSHFYVSDEAQNNGLIDAFGALTSGNTDLSQKSLQLESKGLTLNSNAWMNDTVIIDSTVGKDTFFLITWNSLPPSISLWDPSGTIMENFTVDATSKMAYLSIPGTAKVGTWAYNLQAKANPETLTITVTSRAANSSVPPITVNAKMNKDVNSFPSPMIVYAEILQGYVPVLGANVTAFIESQNGHTEVLELLDNGAGADSFKNDGVYSRYFTAYTENGRYSLKVRAHGGANTARLKLRPPLNRAAYIPGWVVNGEIEANPPRPEIDEDTQTTLEDFSRTASGGAFVVSQVPSLPLPDQYPPSQITDLDATVHEDKIILTWTAPGDNFDVGKVQRYIIRISASILDLRDSFDDALQVNTTDLSPKEANSKESFAFKPENISEENATHIFIAIKSIDKSNLTSKVSNIAQVTLFIPQANPDDIDPTPTPTPTPTPDKSHNSGVNISTLVLSVIGSVVIVNFILSTTI.

The signal sequence occupies residues Met-1–Thr-21. The interval Asp-45–Lys-199 is metalloprotease domain. Asn-75 is a glycosylation site (N-linked (GlcNAc...) asparagine). His-155 lines the Zn(2+) pocket. Glu-156 is an active-site residue. 2 residues coordinate Zn(2+): His-159 and Asp-166. Residues Ile-306–Leu-476 form the VWFA domain. Asn-340, Asn-504, Asn-542, Asn-588, Asn-628, Asn-811, Asn-832, Asn-837, and Asn-852 each carry an N-linked (GlcNAc...) asparagine glycan. A disordered region spans residues Ala-870–Ser-893. Residues Val-895–Leu-915 form a helical membrane-spanning segment.

The protein belongs to the CLCR family. Post-translationally, the translation product is autoproteolytically cleaved by the metalloprotease domain in the endoplasmic reticulum into a N-terminal and a C-terminal products that remain physically associated with each other. The cleavage is necessary for calcium-activated chloride channel (CaCC) activation activity. Primarily expressed in the digestive tract, mainly in colon. Detected in smaller amounts in brain, urogenital organs, testis, and salivary and mammary glands. Highly expressed in the epithelial layer and submucosal gland of the inferior turbinate mucosa. Lower levels in the epithelial layer of nasal polyp.

It localises to the cell membrane. The protein resides in the apical cell membrane. Its subcellular location is the secreted. Its function is as follows. May be involved in mediating calcium-activated chloride conductance. The sequence is that of Calcium-activated chloride channel regulator 4 (CLCA4) from Homo sapiens (Human).